We begin with the raw amino-acid sequence, 151 residues long: MNNLALQSLTESIAIKYFGKAFKHEVYYNKRLRTTGGRYILSSHNIEINPKQYEMFGEKAVIDIIKHELCHYFLHLAGEGYQHRDKAFKSLSAKVGAPRFCTPTESYQDRANYKYRCIYCEQEFIRIKRVNLEKMRCGRCGGILKLLQTRK.

Positions 7–146 (QSLTESIAIK…CGRCGGILKL (140 aa)) constitute a SprT-like domain. Histidine 67 provides a ligand contact to Zn(2+). The active site involves glutamate 68. Residue histidine 71 coordinates Zn(2+).

It belongs to the SprT family. Requires Zn(2+) as cofactor.

It localises to the cytoplasm. The polypeptide is Protein SprT-like (Staphylococcus epidermidis (strain ATCC 35984 / DSM 28319 / BCRC 17069 / CCUG 31568 / BM 3577 / RP62A)).